A 268-amino-acid polypeptide reads, in one-letter code: Aliphatic sulfonates import ATP-binding protein SsuB 3 (268 aa).

Positions 1–27 (MTAAEAPLPPLAPRERTATTAAERRTG) are disordered. The segment covering 13 to 26 (PRERTATTAAERRT) has biased composition (basic and acidic residues). Positions 32-247 (VSLSGVRKSF…DRNDPEALRY (216 aa)) constitute an ABC transporter domain. 64 to 71 (GPSGTGKT) contributes to the ATP binding site.

This sequence belongs to the ABC transporter superfamily. Aliphatic sulfonates importer (TC 3.A.1.17.2) family. In terms of assembly, the complex is composed of two ATP-binding proteins (SsuB), two transmembrane proteins (SsuC) and a solute-binding protein (SsuA).

It localises to the cell membrane. The enzyme catalyses ATP + H2O + aliphatic sulfonate-[sulfonate-binding protein]Side 1 = ADP + phosphate + aliphatic sulfonateSide 2 + [sulfonate-binding protein]Side 1.. Functionally, part of the ABC transporter complex SsuABC involved in aliphatic sulfonates import. Responsible for energy coupling to the transport system. The polypeptide is Aliphatic sulfonates import ATP-binding protein SsuB 3 (Rhodococcus jostii (strain RHA1)).